Here is a 336-residue protein sequence, read N- to C-terminus: Holliday junction branch migration complex subunit RuvB (336 aa).

Residues 4–184 form a large ATPase domain (RuvB-L) region; it reads ADRLIQPQVI…FGIPLRLEFY (181 aa). ATP-binding positions include Arg-24, Gly-65, Lys-68, Thr-69, Thr-70, 131-133, Arg-174, Tyr-184, and Arg-221; that span reads EDY. Thr-69 lines the Mg(2+) pocket. The tract at residues 185 to 255 is small ATPAse domain (RuvB-S); that stretch reads NIKDLSTIVI…VAELALDMLD (71 aa). A head domain (RuvB-H) region spans residues 258 to 336; sequence AEGFDYMDRK…HFNLIQPEAK (79 aa). Arg-294, Arg-313, and Arg-318 together coordinate DNA.

The protein belongs to the RuvB family. As to quaternary structure, homohexamer. Forms an RuvA(8)-RuvB(12)-Holliday junction (HJ) complex. HJ DNA is sandwiched between 2 RuvA tetramers; dsDNA enters through RuvA and exits via RuvB. An RuvB hexamer assembles on each DNA strand where it exits the tetramer. Each RuvB hexamer is contacted by two RuvA subunits (via domain III) on 2 adjacent RuvB subunits; this complex drives branch migration. In the full resolvosome a probable DNA-RuvA(4)-RuvB(12)-RuvC(2) complex forms which resolves the HJ.

It is found in the cytoplasm. The enzyme catalyses ATP + H2O = ADP + phosphate + H(+). The RuvA-RuvB-RuvC complex processes Holliday junction (HJ) DNA during genetic recombination and DNA repair, while the RuvA-RuvB complex plays an important role in the rescue of blocked DNA replication forks via replication fork reversal (RFR). RuvA specifically binds to HJ cruciform DNA, conferring on it an open structure. The RuvB hexamer acts as an ATP-dependent pump, pulling dsDNA into and through the RuvAB complex. RuvB forms 2 homohexamers on either side of HJ DNA bound by 1 or 2 RuvA tetramers; 4 subunits per hexamer contact DNA at a time. Coordinated motions by a converter formed by DNA-disengaged RuvB subunits stimulates ATP hydrolysis and nucleotide exchange. Immobilization of the converter enables RuvB to convert the ATP-contained energy into a lever motion, pulling 2 nucleotides of DNA out of the RuvA tetramer per ATP hydrolyzed, thus driving DNA branch migration. The RuvB motors rotate together with the DNA substrate, which together with the progressing nucleotide cycle form the mechanistic basis for DNA recombination by continuous HJ branch migration. Branch migration allows RuvC to scan DNA until it finds its consensus sequence, where it cleaves and resolves cruciform DNA. This chain is Holliday junction branch migration complex subunit RuvB, found in Shewanella piezotolerans (strain WP3 / JCM 13877).